The following is a 239-amino-acid chain: Purine nucleoside phosphorylase DeoD-type (239 aa).

Position 5 (histidine 5) interacts with a purine D-ribonucleoside. Phosphate-binding residues include glycine 21 and arginine 25. Lysine 27 bears the N6-acetyllysine mark. Phosphate is bound by residues arginine 44 and 88–91 (RVGS). A purine D-ribonucleoside is bound by residues 180-182 (EME) and 204-205 (SD). Aspartate 205 functions as the Proton donor in the catalytic mechanism.

This sequence belongs to the PNP/UDP phosphorylase family. Homohexamer; trimer of homodimers.

The enzyme catalyses a purine D-ribonucleoside + phosphate = a purine nucleobase + alpha-D-ribose 1-phosphate. It catalyses the reaction a purine 2'-deoxy-D-ribonucleoside + phosphate = a purine nucleobase + 2-deoxy-alpha-D-ribose 1-phosphate. Its function is as follows. Catalyzes the reversible phosphorolytic breakdown of the N-glycosidic bond in the beta-(deoxy)ribonucleoside molecules, with the formation of the corresponding free purine bases and pentose-1-phosphate. The polypeptide is Purine nucleoside phosphorylase DeoD-type (Escherichia coli O8 (strain IAI1)).